The following is a 344-amino-acid chain: Phenylalanine--tRNA ligase alpha subunit (344 aa).

Glu256 lines the Mg(2+) pocket.

This sequence belongs to the class-II aminoacyl-tRNA synthetase family. Phe-tRNA synthetase alpha subunit type 1 subfamily. Tetramer of two alpha and two beta subunits. Mg(2+) serves as cofactor.

The protein resides in the cytoplasm. It carries out the reaction tRNA(Phe) + L-phenylalanine + ATP = L-phenylalanyl-tRNA(Phe) + AMP + diphosphate + H(+). This is Phenylalanine--tRNA ligase alpha subunit from Bacillus cereus (strain G9842).